The sequence spans 285 residues: NAD kinase (285 aa).

Asp68 (proton acceptor) is an active-site residue. Residues 68–69 (DG), 142–143 (ND), Arg153, Lys170, Asp172, 183–188 (TAYNLS), and Gln242 each bind NAD(+).

This sequence belongs to the NAD kinase family. Requires a divalent metal cation as cofactor.

The protein localises to the cytoplasm. The catalysed reaction is NAD(+) + ATP = ADP + NADP(+) + H(+). Functionally, involved in the regulation of the intracellular balance of NAD and NADP, and is a key enzyme in the biosynthesis of NADP. Catalyzes specifically the phosphorylation on 2'-hydroxyl of the adenosine moiety of NAD to yield NADP. This is NAD kinase from Syntrophotalea carbinolica (strain DSM 2380 / NBRC 103641 / GraBd1) (Pelobacter carbinolicus).